Reading from the N-terminus, the 931-residue chain is Isoleucine--tRNA ligase (931 aa).

Positions 57–67 (PFANGNIHMGH) match the 'HIGH' region motif. Residue Glu556 participates in L-isoleucyl-5'-AMP binding. The 'KMSKS' region signature appears at 597–601 (KMSKS). Residue Lys600 participates in ATP binding. Residues Cys890, Cys893, Cys910, and Cys913 each contribute to the Zn(2+) site.

The protein belongs to the class-I aminoacyl-tRNA synthetase family. IleS type 1 subfamily. Monomer. Zn(2+) serves as cofactor.

It is found in the cytoplasm. It carries out the reaction tRNA(Ile) + L-isoleucine + ATP = L-isoleucyl-tRNA(Ile) + AMP + diphosphate. In terms of biological role, catalyzes the attachment of isoleucine to tRNA(Ile). As IleRS can inadvertently accommodate and process structurally similar amino acids such as valine, to avoid such errors it has two additional distinct tRNA(Ile)-dependent editing activities. One activity is designated as 'pretransfer' editing and involves the hydrolysis of activated Val-AMP. The other activity is designated 'posttransfer' editing and involves deacylation of mischarged Val-tRNA(Ile). This chain is Isoleucine--tRNA ligase, found in Lactobacillus delbrueckii subsp. bulgaricus (strain ATCC BAA-365 / Lb-18).